Consider the following 101-residue polypeptide: Small ribosomal subunit protein uS14 (101 aa).

It belongs to the universal ribosomal protein uS14 family. As to quaternary structure, part of the 30S ribosomal subunit. Contacts proteins S3 and S10.

In terms of biological role, binds 16S rRNA, required for the assembly of 30S particles and may also be responsible for determining the conformation of the 16S rRNA at the A site. This chain is Small ribosomal subunit protein uS14, found in Aliivibrio fischeri (strain MJ11) (Vibrio fischeri).